Reading from the N-terminus, the 257-residue chain is tRNA (guanine-N(1)-)-methyltransferase (257 aa).

Residues glycine 117 and 137 to 142 (LGDFVL) each bind S-adenosyl-L-methionine.

It belongs to the RNA methyltransferase TrmD family. Homodimer.

The protein resides in the cytoplasm. The catalysed reaction is guanosine(37) in tRNA + S-adenosyl-L-methionine = N(1)-methylguanosine(37) in tRNA + S-adenosyl-L-homocysteine + H(+). Functionally, specifically methylates guanosine-37 in various tRNAs. In Bordetella pertussis (strain Tohama I / ATCC BAA-589 / NCTC 13251), this protein is tRNA (guanine-N(1)-)-methyltransferase.